The following is a 516-amino-acid chain: Putative F-box and FNIP repeat-containing protein L414 (516 aa).

The F-box domain occupies 4–49 (INDLNMDVILHLLTFLTDKNKLNFMMTCTHLYQFISCVKYNNFQLF). 5 FNIP repeats span residues 123 to 165 (FNHT…FGEN), 166 to 208 (FNKM…LMYS), 341 to 383 (YNPK…NFNG), 385 to 428 (YDNI…FGKL), and 429 to 470 (YNKP…FGYM).

The polypeptide is Putative F-box and FNIP repeat-containing protein L414 (Acanthamoeba polyphaga (Amoeba)).